The primary structure comprises 394 residues: Elongation factor Tu (394 aa).

Residues 10 to 205 (KPHVNIGTIG…VDTWIPLPPR (196 aa)) enclose the tr-type G domain. A G1 region spans residues 19 to 26 (GHVDHGKT). Residue 19–26 (GHVDHGKT) coordinates GTP. Position 26 (threonine 26) interacts with Mg(2+). Positions 60–64 (GITIN) are G2. The segment at 81–84 (DCPG) is G3. Residues 81–85 (DCPGH) and 136–139 (NKCD) each bind GTP. The segment at 136–139 (NKCD) is G4. The tract at residues 174–176 (SAL) is G5.

The protein belongs to the TRAFAC class translation factor GTPase superfamily. Classic translation factor GTPase family. EF-Tu/EF-1A subfamily. Monomer.

It localises to the cytoplasm. It carries out the reaction GTP + H2O = GDP + phosphate + H(+). GTP hydrolase that promotes the GTP-dependent binding of aminoacyl-tRNA to the A-site of ribosomes during protein biosynthesis. The chain is Elongation factor Tu from Bacteroides fragilis (strain ATCC 25285 / DSM 2151 / CCUG 4856 / JCM 11019 / LMG 10263 / NCTC 9343 / Onslow / VPI 2553 / EN-2).